We begin with the raw amino-acid sequence, 148 residues long: 3-dehydroquinate dehydratase (148 aa).

The active-site Proton acceptor is the Tyr23. The substrate site is built by Asn75, His81, and Asp88. His101 acts as the Proton donor in catalysis. Substrate-binding positions include 102–103 and Arg112; that span reads LS.

Belongs to the type-II 3-dehydroquinase family. As to quaternary structure, homododecamer.

It carries out the reaction 3-dehydroquinate = 3-dehydroshikimate + H2O. It functions in the pathway metabolic intermediate biosynthesis; chorismate biosynthesis; chorismate from D-erythrose 4-phosphate and phosphoenolpyruvate: step 3/7. Functionally, catalyzes a trans-dehydration via an enolate intermediate. This chain is 3-dehydroquinate dehydratase, found in Cellvibrio japonicus (strain Ueda107) (Pseudomonas fluorescens subsp. cellulosa).